The sequence spans 113 residues: Protein RALF-like 31 (113 aa).

Positions 1 to 21 are cleaved as a signal peptide; sequence MFNSTALVIFAILFLLISADA. Positions 22–58 are cleaved as a propeptide — removed in mature form; sequence FPIPSPNGEIDAMLIRNSIIGEDEDLMPTEISRRVLM. Disulfide bonds link Cys76–Cys86 and Cys98–Cys104.

The protein belongs to the plant rapid alkalinization factor (RALF) family. In terms of processing, proteolytically cleaved, probably by S1P, a subtilisin-like serine protease (subtilase).

Its subcellular location is the secreted. Its function is as follows. Cell signaling peptide that may regulate plant stress, growth, and development. Mediates a rapid alkalinization of extracellular space by mediating a transient increase in the cytoplasmic Ca(2+) concentration leading to a calcium-dependent signaling events through a cell surface receptor and a concomitant activation of some intracellular mitogen-activated protein kinases. This chain is Protein RALF-like 31 (RALFL31), found in Arabidopsis thaliana (Mouse-ear cress).